The following is an 85-amino-acid chain: Cell division topological specificity factor (85 aa).

The protein belongs to the MinE family.

In terms of biological role, prevents the cell division inhibition by proteins MinC and MinD at internal division sites while permitting inhibition at polar sites. This ensures cell division at the proper site by restricting the formation of a division septum at the midpoint of the long axis of the cell. The polypeptide is Cell division topological specificity factor (Xanthomonas campestris pv. campestris (strain 8004)).